The following is a 221-amino-acid chain: Translation initiation factor 6 (221 aa).

The protein belongs to the eIF-6 family.

Functionally, binds to the 50S ribosomal subunit and prevents its association with the 30S ribosomal subunit to form the 70S initiation complex. This is Translation initiation factor 6 from Methanospirillum hungatei JF-1 (strain ATCC 27890 / DSM 864 / NBRC 100397 / JF-1).